Reading from the N-terminus, the 433-residue chain is Serine--tRNA ligase (433 aa).

Residue 235-237 coordinates L-serine; the sequence is TSE. An ATP-binding site is contributed by 266-268; that stretch reads RSE. An L-serine-binding site is contributed by E289. Position 353–356 (353–356) interacts with ATP; it reads EISS. Residue S388 participates in L-serine binding.

It belongs to the class-II aminoacyl-tRNA synthetase family. Type-1 seryl-tRNA synthetase subfamily. In terms of assembly, homodimer. The tRNA molecule binds across the dimer.

The protein localises to the cytoplasm. It catalyses the reaction tRNA(Ser) + L-serine + ATP = L-seryl-tRNA(Ser) + AMP + diphosphate + H(+). The enzyme catalyses tRNA(Sec) + L-serine + ATP = L-seryl-tRNA(Sec) + AMP + diphosphate + H(+). The protein operates within aminoacyl-tRNA biosynthesis; selenocysteinyl-tRNA(Sec) biosynthesis; L-seryl-tRNA(Sec) from L-serine and tRNA(Sec): step 1/1. Its function is as follows. Catalyzes the attachment of serine to tRNA(Ser). Is also able to aminoacylate tRNA(Sec) with serine, to form the misacylated tRNA L-seryl-tRNA(Sec), which will be further converted into selenocysteinyl-tRNA(Sec). This chain is Serine--tRNA ligase, found in Burkholderia vietnamiensis (strain G4 / LMG 22486) (Burkholderia cepacia (strain R1808)).